The primary structure comprises 908 residues: Adhesion G-protein coupled receptor F1 (908 aa).

An N-terminal signal peptide occupies residues 1–20 (MRIGLLWLVPLFTLTEGTDG). At 21–588 (FLQQKNDGRR…VVPVVKWITY (568 aa)) the chain is on the extracellular side. N-linked (GlcNAc...) asparagine glycans are attached at residues Asn-133, Asn-167, Asn-328, Asn-353, Asn-367, Asn-388, Asn-422, Asn-453, Asn-510, Asn-519, Asn-526, and Asn-551. The SEA domain maps to 147-255 (ERAKVWGTFE…GSFRVFGKAP (109 aa)). The region spanning 434-577 (PVTQIQSTRG…SMLMSPFVPS (144 aa)) is the GAIN-B domain. 2 cysteine pairs are disulfide-bonded: Cys-532-Cys-559 and Cys-547-Cys-561. Positions 532-577 (CVFWDFSQLQWSNAGCQLVNETLDTVLCRCSHLTSFSMLMSPFVPS) are GPS. The segment at 566 to 574 (SFSMLMSPF) is stachel. A helical transmembrane segment spans residues 589-609 (IGLSISIASLILCLIIESLFW). At 610–622 (KQTKRSQTSYTRN) the chain is on the cytoplasmic side. The chain crosses the membrane as a helical span at residues 623-643 (ICLVNIAVSLLIADVWFIIAA). At 644–658 (TVDPSVSPSGVCVAA) the chain is on the extracellular side. A disulfide bridge links Cys-655 with Cys-731. Residues 659–679 (VFFTHFFYLAVFFWMLVLGIL) traverse the membrane as a helical segment. Over 680-697 (LAYRIILVFHHMALTTMM) the chain is Cytoplasmic. Residues 698–718 (AIGFCLGYGCPLLISIITLAV) form a helical membrane-spanning segment. Residues 719 to 742 (TQPSNSYKRNDVCWLNWSDKSKPL) lie on the Extracellular side of the membrane. Asn-734 carries N-linked (GlcNAc...) asparagine glycosylation. The chain crosses the membrane as a helical span at residues 743–763 (LAFVVPALTIVAVNLVVVLLV). Residues 764 to 789 (LRKLWRPAVGERLNQDDKATAIRMGK) lie on the Cytoplasmic side of the membrane. The chain crosses the membrane as a helical span at residues 790–810 (SLLVLTPLLGLTWGFGIGTMA). Topologically, residues 811–818 (NSHNLAWH) are extracellular. The helical transmembrane segment at 819–839 (VLFALLNAFQGFFIFCFGILL) threads the bilayer. The Cytoplasmic portion of the chain corresponds to 840-908 (DTKLRQLLSN…ITLTQFLSTE (69 aa)).

The protein belongs to the G-protein coupled receptor 2 family. Adhesion G-protein coupled receptor (ADGR) subfamily. Heterodimer of 2 chains generated by proteolytic processing; the large extracellular N-terminal fragment and the membrane-bound C-terminal fragment predominantly remain associated and non-covalently linked. Post-translationally, autoproteolytically processed at the GPS region of the GAIN-B domain; this cleavage modulates receptor activity. Expressed in liver, kidney and adrenal gland. In kidney strong expression in the renal pelvis and the ureter.

Its subcellular location is the cell membrane. Forms a heterodimer of 2 chains generated by proteolytic processing that remain associated through non-covalent interactions mediated by the GAIN-B domain. In the inactivated receptor, the Stachel sequence (also named stalk) is embedded in the GAIN-B domain, where it adopts a beta-strand conformation. On activation, the Stachel moves into the 7 transmembrane region and adopts a twisted hook-shaped configuration that forms contacts within the receptor, leading to coupling of a G-alpha protein, which activates signaling. The cleaved GAIN-B and N-terminal domains can then dissociate from the rest of the receptor. Functionally, adhesion G-protein coupled receptor (aGPCR) for N-docosahexaenoylethanolamine (synaptamide), an omega-3 fatty acid lipid highly enriched in the brain. Ligand binding causes a conformation change that triggers signaling via guanine nucleotide-binding proteins (G proteins) and modulates the activity of downstream effectors, such as adenylate cyclase. ADGRF1 is coupled to G(s) G proteins and mediates activation of adenylate cyclase activity. Also able to couple to G(q), G(i) and G(12)/G(13) G proteins; additional evidence is however required to confirm this result in vivo. Involved in the development of neurons and cognitive function. In liver, involved in fat accumulation. This chain is Adhesion G-protein coupled receptor F1, found in Mus musculus (Mouse).